The primary structure comprises 343 residues: Glucokinase (343 aa).

Residue 21–26 (ADVGGT) coordinates ATP.

Belongs to the bacterial glucokinase family.

It localises to the cytoplasm. It catalyses the reaction D-glucose + ATP = D-glucose 6-phosphate + ADP + H(+). The polypeptide is Glucokinase (Cupriavidus pinatubonensis (strain JMP 134 / LMG 1197) (Cupriavidus necator (strain JMP 134))).